A 197-amino-acid polypeptide reads, in one-letter code: Protein GrpE (197 aa).

Positions methionine 1–proline 39 are disordered.

Belongs to the GrpE family. As to quaternary structure, homodimer.

Its subcellular location is the cytoplasm. In terms of biological role, participates actively in the response to hyperosmotic and heat shock by preventing the aggregation of stress-denatured proteins, in association with DnaK and GrpE. It is the nucleotide exchange factor for DnaK and may function as a thermosensor. Unfolded proteins bind initially to DnaJ; upon interaction with the DnaJ-bound protein, DnaK hydrolyzes its bound ATP, resulting in the formation of a stable complex. GrpE releases ADP from DnaK; ATP binding to DnaK triggers the release of the substrate protein, thus completing the reaction cycle. Several rounds of ATP-dependent interactions between DnaJ, DnaK and GrpE are required for fully efficient folding. The polypeptide is Protein GrpE (Escherichia coli O127:H6 (strain E2348/69 / EPEC)).